We begin with the raw amino-acid sequence, 364 residues long: UDP-N-acetylglucosamine--N-acetylmuramyl-(pentapeptide) pyrophosphoryl-undecaprenol N-acetylglucosamine transferase (364 aa).

Residues 10–12 (TGG), Asn124, Arg165, Ser193, Ile248, and Gln293 contribute to the UDP-N-acetyl-alpha-D-glucosamine site.

Belongs to the glycosyltransferase 28 family. MurG subfamily.

The protein localises to the cell inner membrane. The catalysed reaction is di-trans,octa-cis-undecaprenyl diphospho-N-acetyl-alpha-D-muramoyl-L-alanyl-D-glutamyl-meso-2,6-diaminopimeloyl-D-alanyl-D-alanine + UDP-N-acetyl-alpha-D-glucosamine = di-trans,octa-cis-undecaprenyl diphospho-[N-acetyl-alpha-D-glucosaminyl-(1-&gt;4)]-N-acetyl-alpha-D-muramoyl-L-alanyl-D-glutamyl-meso-2,6-diaminopimeloyl-D-alanyl-D-alanine + UDP + H(+). It participates in cell wall biogenesis; peptidoglycan biosynthesis. In terms of biological role, cell wall formation. Catalyzes the transfer of a GlcNAc subunit on undecaprenyl-pyrophosphoryl-MurNAc-pentapeptide (lipid intermediate I) to form undecaprenyl-pyrophosphoryl-MurNAc-(pentapeptide)GlcNAc (lipid intermediate II). The polypeptide is UDP-N-acetylglucosamine--N-acetylmuramyl-(pentapeptide) pyrophosphoryl-undecaprenol N-acetylglucosamine transferase (Geobacter metallireducens (strain ATCC 53774 / DSM 7210 / GS-15)).